The primary structure comprises 298 residues: MSATTSEAPNSAVSREASTQSSSATTSQGYVLPEGKIMPNTVFVGGIDVRMDETEIRSFFARYGSVKEVKIITDRTGVSKGYGFVSFYNDVDVQKIVESQINFHGKKLKLGPAIRKQNLCTYHVQPRPLIFNPPPPPQFQSVWSSPNAETYMQPPTMMNPITQYVQAYPPYPSSPVQVITGYQLPVYNYQMPPQWPAGEQRSYVIPPAYTTVNYHCSEVDPGADILPNECSVHDAAPASGNGPQKKSVDRSIQTVVSCLFNPENRLRNSLVTQDDYFKDKRVHHFRRSRAVLKSDHLC.

Positions 1–27 (MSATTSEAPNSAVSREASTQSSSATTS) are disordered. The span at 11 to 27 (SAVSREASTQSSSATTS) shows a compositional bias: low complexity. One can recognise an RRM domain in the interval 40-115 (NTVFVGGIDV…KKLKLGPAIR (76 aa)). Residues 80–132 (KGYGFVSFYNDVDVQKIVESQINFHGKKLKLGPAIRKQNLCTYHVQPRPLIFN) form a homodimerization region. Positions 167–190 (AYPPYPSSPVQVITGYQLPVYNYQ) constitute a DAZ domain. Position 276 is a phosphotyrosine (Tyr-276).

It belongs to the RRM DAZ family. In terms of assembly, homodimer and heterodimer. Forms a heterodimer with DAZ. Interacts with BOLL, DAZAP1 and DAZAP2. Interacts with PUM2. Multiple DAZL RRMs can bind to a single RNA containing multiple GUU triplets. In terms of tissue distribution, expressed predominantly in testis with lower levels in ovary. In testis, it is expressed in pachytene spermatocytes and at lower level in type-B spermatogonia, preleptotene and zygotene spermatocytes. In ovary, it is expressed in maturing follicles. In embryonic and prepuberal ovary, it is expressed in the oocyte and follicular cells.

It localises to the cytoplasm. RNA-binding protein, which is essential for gametogenesis in both males and females. Plays a central role during spermatogenesis. Acts by binding to the 3'-UTR of mRNA, specifically recognizing GUU triplets, and thereby regulating the translation of key transcripts. The sequence is that of Deleted in azoospermia-like (Dazl) from Mus musculus (Mouse).